We begin with the raw amino-acid sequence, 186 residues long: Potassium-transporting ATPase KdpC subunit 1 (186 aa).

Residues 10-30 traverse the membrane as a helical segment; it reads LTIITMVLCGFLFPLAITLIG.

Belongs to the KdpC family. In terms of assembly, the system is composed of three essential subunits: KdpA, KdpB and KdpC.

The protein resides in the cell membrane. In terms of biological role, part of the high-affinity ATP-driven potassium transport (or Kdp) system, which catalyzes the hydrolysis of ATP coupled with the electrogenic transport of potassium into the cytoplasm. This subunit acts as a catalytic chaperone that increases the ATP-binding affinity of the ATP-hydrolyzing subunit KdpB by the formation of a transient KdpB/KdpC/ATP ternary complex. This is Potassium-transporting ATPase KdpC subunit 1 from Staphylococcus aureus (strain Mu50 / ATCC 700699).